The following is a 470-amino-acid chain: Cyclic AMP-responsive element-binding protein 3-like protein 3 (470 aa).

Over 1-319 (MDGDISTGKM…TSKPAHAGTC (319 aa)) the chain is Cytoplasmic. The segment at 59 to 145 (SDSDEFLNSI…PEPPRTQVHE (87 aa)) is disordered. Residues 239–302 (VLKKIRRKIR…LSLLEQLKHL (64 aa)) enclose the bZIP domain. Residues 241-270 (KKIRRKIRNKQSAQESRKKKKEYIDGLENR) are basic motif. Positions 281–302 (LQRKVLHLEKQNLSLLEQLKHL) are leucine-zipper. A Glycyl lysine isopeptide (Lys-Gly) (interchain with G-Cter in ubiquitin) cross-link involves residue lysine 290. A helical; Signal-anchor for type II membrane protein membrane pass occupies residues 320–340 (IAVLLLSFVLIILPSISPFTA). The Lumenal segment spans residues 341-470 (NKVDSPGDFI…RVVQDALGVL (130 aa)). N-linked (GlcNAc...) asparagine glycans are attached at residues asparagine 410 and asparagine 417.

Belongs to the bZIP family. ATF subfamily. In terms of assembly, binds DNA as a dimer. May form homodimers. Interacts with ATF6. Interacts with SYNV1/HRD1; this interaction leads to CREB3L3 ubiquitination and proteasomal degradation. In terms of processing, controlled by regulated intramembrane proteolysis (RIP). Following ER stress a fragment containing the cytoplasmic transcription factor domain is released by proteolysis. The cleavage seems to be performed sequentially by site-1 and site-2 proteases (PS1 and PS2). Post-translationally, N-glycosylation is required for optimal proteolytic activation. Ubiquitinated at Lys-290 by SYNV1/HRD1 via 'Lys-27'-linked ubiquitin.

The protein localises to the endoplasmic reticulum membrane. The protein resides in the nucleus. Functionally, transcription factor that may act during endoplasmic reticulum stress by activating unfolded protein response target genes. Activated in response to cAMP stimulation. Binds the cAMP response element (CRE). Activates transcription through box-B element and CRE. Seems to function synergistically with ATF6. In acute inflammatory response, may activate expression of acute phase response (APR) genes. May be involved in growth suppression. Regulates FGF21 transcription. Plays a crucial role in the regulation of triglyceride metabolism and is required for the maintenance of normal plasma triglyceride concentrations. The protein is Cyclic AMP-responsive element-binding protein 3-like protein 3 (Creb3l3) of Rattus norvegicus (Rat).